A 421-amino-acid polypeptide reads, in one-letter code: 3-oxoacyl-[acyl-carrier-protein] synthase 2 (421 aa).

A Ketosynthase family 3 (KS3) domain is found at 1–417; sequence MRRVVITGTG…GTNASLILRR (417 aa). Active-site for beta-ketoacyl synthase activity residues include C170, H311, and H347.

Belongs to the thiolase-like superfamily. Beta-ketoacyl-ACP synthases family. Homodimer.

The catalysed reaction is a fatty acyl-[ACP] + malonyl-[ACP] + H(+) = a 3-oxoacyl-[ACP] + holo-[ACP] + CO2. It catalyses the reaction (9Z)-hexadecenoyl-[ACP] + malonyl-[ACP] + H(+) = 3-oxo-(11Z)-octadecenoyl-[ACP] + holo-[ACP] + CO2. The protein operates within lipid metabolism; fatty acid biosynthesis. In terms of biological role, involved in the type II fatty acid elongation cycle. Catalyzes the elongation of a wide range of acyl-ACP by the addition of two carbons from malonyl-ACP to an acyl acceptor. Can efficiently catalyze the conversion of palmitoleoyl-ACP (cis-hexadec-9-enoyl-ACP) to cis-vaccenoyl-ACP (cis-octadec-11-enoyl-ACP), an essential step in the thermal regulation of fatty acid composition. The sequence is that of 3-oxoacyl-[acyl-carrier-protein] synthase 2 (fabF) from Rhizobium meliloti (strain 1021) (Ensifer meliloti).